The chain runs to 285 residues: 4-diphosphocytidyl-2-C-methyl-D-erythritol kinase (285 aa).

K12 is an active-site residue. Position 95 to 105 (95 to 105 (PMGGGVGGGSS)) interacts with ATP. D137 is an active-site residue.

This sequence belongs to the GHMP kinase family. IspE subfamily.

It catalyses the reaction 4-CDP-2-C-methyl-D-erythritol + ATP = 4-CDP-2-C-methyl-D-erythritol 2-phosphate + ADP + H(+). It functions in the pathway isoprenoid biosynthesis; isopentenyl diphosphate biosynthesis via DXP pathway; isopentenyl diphosphate from 1-deoxy-D-xylulose 5-phosphate: step 3/6. Catalyzes the phosphorylation of the position 2 hydroxy group of 4-diphosphocytidyl-2C-methyl-D-erythritol. The sequence is that of 4-diphosphocytidyl-2-C-methyl-D-erythritol kinase from Actinobacillus pleuropneumoniae serotype 7 (strain AP76).